The chain runs to 404 residues: MSPSDVPINWKRNLTVTWLGCFLTGAAFSLVMPFLPLYVEQLGVTGHSALNMWSGLVFSITFLFSAIASPFWGGLADRKGRKIMLLRSALGMAIVMLLMGMAQNIWQFLILRALLGLLGGFILNANALIATQVPRHKSGWALGTLSTGGVSGALLGPLAGGLLADHYGLRPVFFITASVLFICFLLTFFFIRENFLPVSKKEMLHVREVVASLKNPRLVLSLFVTTLIIQVATGSIAPILTLYVRELAGNVSNIAFISGMIASVPGVAALLSAPRLGKLGDRIGPEKILIVALIISVLLLIPMSFVQTPWQLALLRFLLGAADGALLPAVQTLLVYNSTNQIAGRIFSYNQSFRDIGNVTGPLMGAAISASYGFRAVFCVTAGVVLFNAIYSWNSLRRRRLAIE.

Transmembrane regions (helical) follow at residues 19–39 (LGCF…PLYV), 56–76 (LVFS…GGLA), 90–110 (LGMA…QFLI), 113–133 (ALLG…ATQV), 144–164 (TLST…GLLA), 171–191 (PVFF…FFFI), 222–242 (LFVT…ILTL), 254–274 (IAFI…LSAP), 288–308 (ILIV…FVQT), 317–337 (FLLG…LVYN), and 376–396 (AVFC…WNSL).

The protein belongs to the major facilitator superfamily. DHA1 family. MdtG (TC 2.A.1.2.20) subfamily.

The protein localises to the cell inner membrane. The chain is Multidrug resistance protein MdtG from Salmonella choleraesuis (strain SC-B67).